The sequence spans 186 residues: Elongation factor P (186 aa).

This sequence belongs to the elongation factor P family.

The protein localises to the cytoplasm. The protein operates within protein biosynthesis; polypeptide chain elongation. Functionally, involved in peptide bond synthesis. Stimulates efficient translation and peptide-bond synthesis on native or reconstituted 70S ribosomes in vitro. Probably functions indirectly by altering the affinity of the ribosome for aminoacyl-tRNA, thus increasing their reactivity as acceptors for peptidyl transferase. This chain is Elongation factor P, found in Brucella ovis (strain ATCC 25840 / 63/290 / NCTC 10512).